The chain runs to 198 residues: Holliday junction branch migration complex subunit RuvA (198 aa).

The interval Met-1–His-63 is domain I. A domain II region spans residues Ser-64–Pro-142. A flexible linker region spans residues Pro-143–Gln-147. The tract at residues Gln-148–Gly-198 is domain III.

Belongs to the RuvA family. As to quaternary structure, homotetramer. Forms an RuvA(8)-RuvB(12)-Holliday junction (HJ) complex. HJ DNA is sandwiched between 2 RuvA tetramers; dsDNA enters through RuvA and exits via RuvB. An RuvB hexamer assembles on each DNA strand where it exits the tetramer. Each RuvB hexamer is contacted by two RuvA subunits (via domain III) on 2 adjacent RuvB subunits; this complex drives branch migration. In the full resolvosome a probable DNA-RuvA(4)-RuvB(12)-RuvC(2) complex forms which resolves the HJ.

It is found in the cytoplasm. Its function is as follows. The RuvA-RuvB-RuvC complex processes Holliday junction (HJ) DNA during genetic recombination and DNA repair, while the RuvA-RuvB complex plays an important role in the rescue of blocked DNA replication forks via replication fork reversal (RFR). RuvA specifically binds to HJ cruciform DNA, conferring on it an open structure. The RuvB hexamer acts as an ATP-dependent pump, pulling dsDNA into and through the RuvAB complex. HJ branch migration allows RuvC to scan DNA until it finds its consensus sequence, where it cleaves and resolves the cruciform DNA. In Streptococcus equi subsp. equi (strain 4047), this protein is Holliday junction branch migration complex subunit RuvA.